The primary structure comprises 146 residues: Large ribosomal subunit protein uL15 (146 aa).

Positions 1-55 (MGLRLNELSPGVGAKKTAQRRGRGIGSGLGKTGGRGVKGQKSRSGSSIRSGFEGG) are disordered. The span at 24-37 (GIGSGLGKTGGRGV) shows a compositional bias: gly residues.

The protein belongs to the universal ribosomal protein uL15 family. As to quaternary structure, part of the 50S ribosomal subunit.

In terms of biological role, binds to the 23S rRNA. In Psychrobacter cryohalolentis (strain ATCC BAA-1226 / DSM 17306 / VKM B-2378 / K5), this protein is Large ribosomal subunit protein uL15.